Consider the following 495-residue polypeptide: NADH-ubiquinone oxidoreductase chain 4 (495 aa).

The next 15 membrane-spanning stretches (helical) occupy residues 9-29 (YFDL…LLFI), 39-59 (LIGL…WIQF), 89-109 (LSLF…LVGW), 118-138 (EYII…CMLD), 139-159 (LLLF…IIGV), 173-193 (FFLY…LILL), 214-234 (ILLW…VPVH), 245-265 (PTAG…YGFL), 272-292 (FPEA…IAII), 313-333 (VAHM…GIGG), 335-355 (ILLM…VGVL), 367-387 (YGGL…FTLA), 388-408 (NMSL…VGAF), 413-433 (LVAT…LWLY), and 457-477 (VFIF…PKVF).

Belongs to the complex I subunit 4 family.

The protein resides in the mitochondrion membrane. It catalyses the reaction a ubiquinone + NADH + 5 H(+)(in) = a ubiquinol + NAD(+) + 4 H(+)(out). In terms of biological role, core subunit of the mitochondrial membrane respiratory chain NADH dehydrogenase (Complex I) that is believed to belong to the minimal assembly required for catalysis. Complex I functions in the transfer of electrons from NADH to the respiratory chain. The immediate electron acceptor for the enzyme is believed to be ubiquinone. The sequence is that of NADH-ubiquinone oxidoreductase chain 4 (ND4) from Triticum aestivum (Wheat).